Reading from the N-terminus, the 366-residue chain is Beta sliding clamp (366 aa).

Belongs to the beta sliding clamp family. Forms a ring-shaped head-to-tail homodimer around DNA which binds and tethers DNA polymerases and other proteins to the DNA. The DNA replisome complex has a single clamp-loading complex (3 tau and 1 each of delta, delta', psi and chi subunits) which binds 3 Pol III cores (1 core on the leading strand and 2 on the lagging strand) each with a beta sliding clamp dimer. Additional proteins in the replisome are other copies of gamma, psi and chi, Ssb, DNA helicase and RNA primase.

The protein resides in the cytoplasm. Confers DNA tethering and processivity to DNA polymerases and other proteins. Acts as a clamp, forming a ring around DNA (a reaction catalyzed by the clamp-loading complex) which diffuses in an ATP-independent manner freely and bidirectionally along dsDNA. Initially characterized for its ability to contact the catalytic subunit of DNA polymerase III (Pol III), a complex, multichain enzyme responsible for most of the replicative synthesis in bacteria; Pol III exhibits 3'-5' exonuclease proofreading activity. The beta chain is required for initiation of replication as well as for processivity of DNA replication. This chain is Beta sliding clamp (dnaN), found in Salmonella typhimurium (strain LT2 / SGSC1412 / ATCC 700720).